The primary structure comprises 769 residues: 5-methyltetrahydropteroyltriglutamate--homocysteine methyltransferase (769 aa).

5-methyltetrahydropteroyltri-L-glutamate contacts are provided by residues 18–21 and Lys-127; that span reads RELK. L-homocysteine contacts are provided by residues 447–449 and Glu-500; that span reads IGS. L-methionine-binding positions include 447–449 and Glu-500; that span reads IGS. 5-methyltetrahydropteroyltri-L-glutamate is bound by residues 531–532 and Trp-577; that span reads RC. L-homocysteine is bound at residue Asp-615. Asp-615 serves as a coordination point for L-methionine. 5-methyltetrahydropteroyltri-L-glutamate is bound at residue Glu-621. Zn(2+) contacts are provided by His-657, Cys-659, and Glu-681. The active-site Proton donor is the His-710. Residue Cys-742 coordinates Zn(2+).

Belongs to the vitamin-B12 independent methionine synthase family. It depends on Zn(2+) as a cofactor.

The enzyme catalyses 5-methyltetrahydropteroyltri-L-glutamate + L-homocysteine = tetrahydropteroyltri-L-glutamate + L-methionine. It participates in amino-acid biosynthesis; L-methionine biosynthesis via de novo pathway; L-methionine from L-homocysteine (MetE route): step 1/1. In terms of biological role, catalyzes the transfer of a methyl group from 5-methyltetrahydrofolate to homocysteine resulting in methionine formation. This chain is 5-methyltetrahydropteroyltriglutamate--homocysteine methyltransferase, found in Chelativorans sp. (strain BNC1).